Here is a 41-residue protein sequence, read N- to C-terminus: Sucrose porin (41 aa).

The N-terminal stretch at Met-1 to Ala-22 is a signal peptide.

The protein belongs to the porin LamB (TC 1.B.3) family. Homotrimer.

The protein resides in the cell outer membrane. Its function is as follows. Porin for sucrose uptake. This is Sucrose porin (scrY) from Salmonella thompson.